The chain runs to 142 residues: Large ribosomal subunit protein uL13 (142 aa).

This sequence belongs to the universal ribosomal protein uL13 family. Part of the 50S ribosomal subunit.

Functionally, this protein is one of the early assembly proteins of the 50S ribosomal subunit, although it is not seen to bind rRNA by itself. It is important during the early stages of 50S assembly. The polypeptide is Large ribosomal subunit protein uL13 (Psychrobacter sp. (strain PRwf-1)).